Consider the following 145-residue polypeptide: MYCRMEFNFFMNDVVQMARKEMVESGYDQLTTPEEVDEVLKEKGTVLVMVNSVCGCAGGIARPAAAYMKNYDKKPDRFVTVFAGQDKEATARAREYFKGYAPSSPSFALLKDGEIQMMVERHEIEGHEPIQVVQKLEKAFDQYCS.

Belongs to the bacilliredoxin family.

The chain is Bacilliredoxin BH2759 from Halalkalibacterium halodurans (strain ATCC BAA-125 / DSM 18197 / FERM 7344 / JCM 9153 / C-125) (Bacillus halodurans).